The primary structure comprises 228 residues: Urease accessory protein UreF 1 (228 aa).

Belongs to the UreF family. As to quaternary structure, ureD, UreF and UreG form a complex that acts as a GTP-hydrolysis-dependent molecular chaperone, activating the urease apoprotein by helping to assemble the nickel containing metallocenter of UreC. The UreE protein probably delivers the nickel.

It localises to the cytoplasm. Functionally, required for maturation of urease via the functional incorporation of the urease nickel metallocenter. Its function is as follows. Disruption of the ure1 gene cluster suggests that it protects brucellae during their passage through the stomach. The major route of infection in human brucellosis is oral. The polypeptide is Urease accessory protein UreF 1 (Brucella abortus (strain 2308)).